The primary structure comprises 176 residues: Late lactation protein A (176 aa).

The N-terminal stretch at 1–18 is a signal peptide; that stretch reads MRVLFLTISLSLFSIIHA. C78 and C171 form a disulfide bridge.

Belongs to the calycin superfamily. Lipocalin family. In terms of tissue distribution, mammary gland specific. Secreted in milk.

It localises to the secreted. Probably serves a role in the transport of a small ligand released during the hydrolysis of milk fat. The polypeptide is Late lactation protein A (LLPA) (Notamacropus eugenii (Tammar wallaby)).